A 306-amino-acid polypeptide reads, in one-letter code: Transcription initiation factor IIB 2 (306 aa).

The segment at 6-37 (PKRVCPICGSTEFIYDPRRGEIVCAKCGYVIE) adopts a TFIIB-type zinc-finger fold. Zn(2+) is bound by residues Cys10, Cys13, Cys29, and Cys32. Tandem repeats lie at residues 123–206 (SELD…ARGL) and 217–298 (EYVD…ELVE).

It belongs to the TFIIB family.

Functionally, stabilizes TBP binding to an archaeal box-A promoter. Also responsible for recruiting RNA polymerase II to the pre-initiation complex (DNA-TBP-TFIIB). The sequence is that of Transcription initiation factor IIB 2 from Thermococcus kodakarensis (strain ATCC BAA-918 / JCM 12380 / KOD1) (Pyrococcus kodakaraensis (strain KOD1)).